A 404-amino-acid chain; its full sequence is AT-hook motif nuclear-localized protein 3 (404 aa).

Disordered stretches follow at residues 1–51 (MEER…VPPT), 70–100 (PFSL…PDGT), and 113–133 (SVPL…GKSN). Residues 7–19 (TNINNNITSSFGL) are compositionally biased toward polar residues. Positions 35 to 51 (DPPPRPENPNPFLVPPT) are enriched in pro residues. Polar residues predominate over residues 71–83 (FSLTMPTENTSAE). The Bipartite nuclear localization signal motif lies at 86–94 (KKKRGRPRK). The segment at residues 86-98 (KKKRGRPRKYNPD) is a DNA-binding region (a.T hook). The segment covering 123–133 (RKRGRGRGKSN) has biased composition (basic residues). Residues 163–308 (GANFTPHVLI…RFGAQPSSIS (146 aa)) form the PPC domain. The disordered stretch occupies residues 359 to 404 (PFSSIPVGGGGGGEVGEEEGEEDDDELEGEDEEFGGDSQSDNEIPS). Acidic residues predominate over residues 373 to 393 (VGEEEGEEDDDELEGEDEEFG).

As to quaternary structure, homodimer. Interacts with AHL4. As to expression, expressed in both procambium and xylem precursors of the root meristem. Also detected in the endodermis in the late elongation zone and onwards.

The protein resides in the nucleus. Functionally, transcription factor that specifically binds AT-rich DNA sequences related to the nuclear matrix attachment regions (MARs). Acts redundantly with AHL4 to regulate the formation of tissue boundary between the xylem and procambium in the root meristem. The protein is AT-hook motif nuclear-localized protein 3 of Arabidopsis thaliana (Mouse-ear cress).